Here is a 318-residue protein sequence, read N- to C-terminus: Protoheme IX farnesyltransferase (318 aa).

The next 9 helical transmembrane spans lie at 33-53 (VMSLVVFTALVGLVAAPVSVH), 54-74 (PFIGFCAILFIAIGGGASGAL), 102-122 (GEALALGLGLSGLSVMMLALA), 125-145 (VLAGAFLAFTIFFYVVVYTMW), 154-174 (IVIGGAAGAFPPVIGWIAATG), 181-201 (WLMFALTFMWTPPHFWALALF), 225-245 (VHILIYTILLALLALGTAFSN), 246-266 (IGGPIYLAVALVLNALFLLGA), and 288-308 (FFKLSLLYLFLHFGAILAEAL).

This sequence belongs to the UbiA prenyltransferase family. Protoheme IX farnesyltransferase subfamily. In terms of assembly, interacts with CtaA.

The protein localises to the cell inner membrane. The catalysed reaction is heme b + (2E,6E)-farnesyl diphosphate + H2O = Fe(II)-heme o + diphosphate. It functions in the pathway porphyrin-containing compound metabolism; heme O biosynthesis; heme O from protoheme: step 1/1. Functionally, converts heme B (protoheme IX) to heme O by substitution of the vinyl group on carbon 2 of heme B porphyrin ring with a hydroxyethyl farnesyl side group. This is Protoheme IX farnesyltransferase from Ruegeria pomeroyi (strain ATCC 700808 / DSM 15171 / DSS-3) (Silicibacter pomeroyi).